Consider the following 516-residue polypeptide: Endoglucanase 20 (516 aa).

The first 23 residues, 1 to 23 (MAAGMVATMVLLTCLAAGGLVVG), serve as a signal peptide directing secretion. The N-linked (GlcNAc...) asparagine glycan is linked to asparagine 83. The active-site Nucleophile is aspartate 93. Catalysis depends on residues histidine 416, aspartate 468, and glutamate 477.

The protein belongs to the glycosyl hydrolase 9 (cellulase E) family.

It is found in the secreted. It catalyses the reaction Endohydrolysis of (1-&gt;4)-beta-D-glucosidic linkages in cellulose, lichenin and cereal beta-D-glucans.. The sequence is that of Endoglucanase 20 (GLU15) from Oryza sativa subsp. japonica (Rice).